Consider the following 842-residue polypeptide: Protein translocase subunit SecA (842 aa).

Residues Gln-85, 103–107 (GEGKT), and Asp-493 contribute to the ATP site. Zn(2+) is bound by residues Cys-825, Cys-827, Cys-836, and His-837.

The protein belongs to the SecA family. As to quaternary structure, monomer and homodimer. Part of the essential Sec protein translocation apparatus which comprises SecA, SecYEG and auxiliary proteins SecDF. Other proteins may also be involved. Zn(2+) is required as a cofactor.

It is found in the cell membrane. It localises to the cytoplasm. It carries out the reaction ATP + H2O + cellular proteinSide 1 = ADP + phosphate + cellular proteinSide 2.. In terms of biological role, part of the Sec protein translocase complex. Interacts with the SecYEG preprotein conducting channel. Has a central role in coupling the hydrolysis of ATP to the transfer of proteins into and across the cell membrane, serving as an ATP-driven molecular motor driving the stepwise translocation of polypeptide chains across the membrane. The protein is Protein translocase subunit SecA of Streptococcus equi subsp. zooepidemicus (strain MGCS10565).